A 404-amino-acid chain; its full sequence is MNQILPNSFRSGPDERGHFGIFGGRFVAETLMPLILELEKAYAEAKDDPAFRTEMDGYLKHYVGRPSPLYFAERLTEHFGGAKIYFKREDLNHTGAHKVNNVLGQIMLARRMGKQRIIAETGAGMHGVATATMCAKFGLQCVVYMGAVDVERQQPNVLRMKALGAEVRPVTSGANTLKDAMNEALRDWVTNVHDTFYCIGTVAGPHPYPMMVRDFQEVIGQEVREQILETEGRLPDSLIACIGGGSNAMGLFHPFLDDAGVVIYGVEAAGHGLSKLHAASIAGGKPGVLHGNRTYLLMDDDGQIQEAHSISAGLDYPGIGPEHAWLHDVGRVNFLSATDAEALDAFKLCCRLEGIIPALEPAHALAKVADLAPILPKDHLMVLNMSGRGDKDLASVAEHLGGKF.

K98 is modified (N6-(pyridoxal phosphate)lysine).

The protein belongs to the TrpB family. In terms of assembly, tetramer of two alpha and two beta chains. It depends on pyridoxal 5'-phosphate as a cofactor.

It catalyses the reaction (1S,2R)-1-C-(indol-3-yl)glycerol 3-phosphate + L-serine = D-glyceraldehyde 3-phosphate + L-tryptophan + H2O. The protein operates within amino-acid biosynthesis; L-tryptophan biosynthesis; L-tryptophan from chorismate: step 5/5. Functionally, the beta subunit is responsible for the synthesis of L-tryptophan from indole and L-serine. The protein is Tryptophan synthase beta chain of Rhodopseudomonas palustris (strain BisB5).